A 339-amino-acid chain; its full sequence is MIILVDAMGGDNAPEAIVNGCLDAVSEADGFEILLIGDEGKIREILNKRSYDTSRIKIHHASEVITVEDTPTKAIKTKKDSSMVVGFKLLKEKKGDIFLSCGNSGALMTGALFILGRIKGVDRPAIGAIVPTKAGKGLIIDAGLNTVCKPVNYQQFGIMGSIYMKEMLGIENPKVGLLNIGAEVGKGNETLKQAYSLLSESNINFVGNVEGNDVALGKVDVVVCDGFTGNVLLKFYEGAGSYFYNLIKGIMLKNLKTKMAALMLKKDMKVLKKIMDADENGGAPILGVDGLVFKSHGSSNARTVKNVIIKASKFAETKALDKIRQEFVNMEVEDIEQDL.

Belongs to the PlsX family. Homodimer. Probably interacts with PlsY.

Its subcellular location is the cytoplasm. The enzyme catalyses a fatty acyl-[ACP] + phosphate = an acyl phosphate + holo-[ACP]. It functions in the pathway lipid metabolism; phospholipid metabolism. Its function is as follows. Catalyzes the reversible formation of acyl-phosphate (acyl-PO(4)) from acyl-[acyl-carrier-protein] (acyl-ACP). This enzyme utilizes acyl-ACP as fatty acyl donor, but not acyl-CoA. This Acetivibrio thermocellus (strain ATCC 27405 / DSM 1237 / JCM 9322 / NBRC 103400 / NCIMB 10682 / NRRL B-4536 / VPI 7372) (Clostridium thermocellum) protein is Phosphate acyltransferase.